The sequence spans 309 residues: MANSLYQKHIISIAELSRAELELIVKTAGQLKAQPNPELIKHKVVASCFFEPSTRTRLSFETAIQRIGGSVIGFDNGGNTSLAKKGETLADSVRVISSYVDAFVMRHPQEGAARLASEFSNGIPVINAGDGSNQHPSQTLLDLYSIFETQGRLDNLDVAFVGDLKYGRTVHSLAQALAKFDNNRFYFVAPEALAMPDYICEELDEAGVKYQVFSDMESVIPELDILYMTRVQKERFDESEYAHIKSAYILTAAHLSDARSNLKVLHPLPRVDEITTDVDKTPHAYYFEQVENGVYAREALLALVLNESL.

Carbamoyl phosphate-binding residues include Arg-55 and Thr-56. Lys-85 serves as a coordination point for L-aspartate. Residues Arg-106, His-135, and Gln-138 each coordinate carbamoyl phosphate. L-aspartate contacts are provided by Arg-168 and Arg-230. Residues Leu-268 and Pro-269 each contribute to the carbamoyl phosphate site.

The protein belongs to the aspartate/ornithine carbamoyltransferase superfamily. ATCase family. As to quaternary structure, heterododecamer (2C3:3R2) of six catalytic PyrB chains organized as two trimers (C3), and six regulatory PyrI chains organized as three dimers (R2).

It catalyses the reaction carbamoyl phosphate + L-aspartate = N-carbamoyl-L-aspartate + phosphate + H(+). The protein operates within pyrimidine metabolism; UMP biosynthesis via de novo pathway; (S)-dihydroorotate from bicarbonate: step 2/3. Catalyzes the condensation of carbamoyl phosphate and aspartate to form carbamoyl aspartate and inorganic phosphate, the committed step in the de novo pyrimidine nucleotide biosynthesis pathway. The protein is Aspartate carbamoyltransferase catalytic subunit of Vibrio cholerae serotype O1 (strain ATCC 39541 / Classical Ogawa 395 / O395).